The primary structure comprises 210 residues: Tetraspanin-31 (210 aa).

Topologically, residues 1–12 are cytoplasmic; that stretch reads MVCGGFACSKNA. Residues 13 to 33 form a helical membrane-spanning segment; it reads LCALNVVYMLVSLLLIGVAAW. Topologically, residues 34–44 are extracellular; that stretch reads GKGLGLVSSIH. Residues 45-65 traverse the membrane as a helical segment; sequence IIGGVIAVGVFLLLIAVAGLV. Residues 66–72 are Cytoplasmic-facing; it reads GAVNHHQ. The helical transmembrane segment at 73 to 93 threads the bilayer; sequence VLLFFYMIILGLVFIFQFVIS. Topologically, residues 94–173 are extracellular; that stretch reads CSCLAINRSK…FLKHSDEALK (80 aa). Asparagine 100, asparagine 109, asparagine 117, and asparagine 134 each carry an N-linked (GlcNAc...) asparagine glycan. A helical transmembrane segment spans residues 174 to 194; it reads ILGGVGLFFSFTEILGVWLAM. At 195–210 the chain is on the cytoplasmic side; the sequence is RFRNQKDPRANPSAFL.

Belongs to the tetraspanin (TM4SF) family.

The protein localises to the membrane. This Homo sapiens (Human) protein is Tetraspanin-31 (TSPAN31).